We begin with the raw amino-acid sequence, 328 residues long: GMP reductase (328 aa).

Catalysis depends on C174, which acts as the Thioimidate intermediate. 203 to 226 (IIADGGIRTHGDIAKSIRFGASMV) is an NADP(+) binding site.

It belongs to the IMPDH/GMPR family. GuaC type 2 subfamily.

The catalysed reaction is IMP + NH4(+) + NADP(+) = GMP + NADPH + 2 H(+). In terms of biological role, catalyzes the irreversible NADPH-dependent deamination of GMP to IMP. It functions in the conversion of nucleobase, nucleoside and nucleotide derivatives of G to A nucleotides, and in maintaining the intracellular balance of A and G nucleotides. The protein is GMP reductase of Staphylococcus saprophyticus subsp. saprophyticus (strain ATCC 15305 / DSM 20229 / NCIMB 8711 / NCTC 7292 / S-41).